Consider the following 352-residue polypeptide: N-terminal EF-hand calcium-binding protein 1 (352 aa).

At Ser-4 the chain carries Phosphoserine. EF-hand domains lie at Lys-26 to Ser-61 and Leu-60 to Glu-95. Asp-39, Asn-41, Asp-43, Lys-45, and Glu-50 together coordinate Ca(2+). A coiled-coil region spans residues Leu-135 to Gln-163. Residues Glu-155–Val-202 are disordered. The segment covering His-190 to Val-202 has biased composition (polar residues). 2 positions are modified to phosphoserine: Ser-192 and Ser-197. Residues Glu-209–Tyr-275 are a coiled coil. In terms of domain architecture, ABM spans Met-252–Met-340.

Interacts with STX1. May interact with CPNE6.

It is found in the cytoplasm. This chain is N-terminal EF-hand calcium-binding protein 1 (Necab1), found in Rattus norvegicus (Rat).